The primary structure comprises 87 residues: U3-theraphotoxin-Hhn1a 2 (87 aa).

The signal sequence occupies residues 1 to 24 (MVNMKASMFLTFAGLVLLFVVCYA). Positions 25 to 52 (SESEEKEFPKEMLSSIFAVDDDFKQEER) are excised as a propeptide. Disulfide bonds link Cys54–Cys67, Cys61–Cys72, and Cys66–Cys79.

The protein belongs to the neurotoxin 10 (Hwtx-1) family. 51 (Hntx-8) subfamily. Hntx-8 sub-subfamily. In terms of tissue distribution, expressed by the venom gland.

The protein resides in the secreted. Functionally, ion channel inhibitor. The protein is U3-theraphotoxin-Hhn1a 2 of Cyriopagopus hainanus (Chinese bird spider).